The following is a 544-amino-acid chain: DNA mismatch repair protein MutL (544 aa).

This sequence belongs to the DNA mismatch repair MutL/HexB family.

Its function is as follows. This protein is involved in the repair of mismatches in DNA. It is required for dam-dependent methyl-directed DNA mismatch repair. May act as a 'molecular matchmaker', a protein that promotes the formation of a stable complex between two or more DNA-binding proteins in an ATP-dependent manner without itself being part of a final effector complex. In Thermodesulfovibrio yellowstonii (strain ATCC 51303 / DSM 11347 / YP87), this protein is DNA mismatch repair protein MutL.